Consider the following 614-residue polypeptide: Serine/threonine-protein kinase-like protein E (614 aa).

One can recognise a Protein kinase domain in the interval 15 to 404 (YLIQLHLGQN…NPNTNGAPLS (390 aa)). An ATP-binding site is contributed by 21 to 29 (LGQNSLGQQ). A compositionally biased stretch (polar residues) spans 256 to 269 (PEQTDNGVGKSSTG). The disordered stretch occupies residues 256–284 (PEQTDNGVGKSSTGEPPFPTVHQSPESSS).

Belongs to the protein kinase superfamily. Ser/Thr protein kinase family.

Functionally, lacks protein kinase activity. This Synechocystis sp. (strain ATCC 27184 / PCC 6803 / Kazusa) protein is Serine/threonine-protein kinase-like protein E (spkE).